The sequence spans 492 residues: N-succinylglutamate 5-semialdehyde dehydrogenase (492 aa).

Residue 220-225 (GSSTTG) participates in NAD(+) binding. Catalysis depends on residues Glu243 and Cys277.

Belongs to the aldehyde dehydrogenase family. AstD subfamily.

It carries out the reaction N-succinyl-L-glutamate 5-semialdehyde + NAD(+) + H2O = N-succinyl-L-glutamate + NADH + 2 H(+). It participates in amino-acid degradation; L-arginine degradation via AST pathway; L-glutamate and succinate from L-arginine: step 4/5. Catalyzes the NAD-dependent reduction of succinylglutamate semialdehyde into succinylglutamate. The chain is N-succinylglutamate 5-semialdehyde dehydrogenase from Klebsiella pneumoniae subsp. pneumoniae (strain ATCC 700721 / MGH 78578).